A 218-amino-acid chain; its full sequence is Pyridoxine/pyridoxamine 5'-phosphate oxidase (218 aa).

FMN is bound by residues 66–71 (RVVLLK), arginine 87, lysine 88, and glutamine 110. Lysine 71 serves as a coordination point for substrate. Substrate contacts are provided by tyrosine 128, arginine 132, and serine 136. FMN is bound by residues 145-146 (QS) and tryptophan 190. Residue 196–198 (RLH) participates in substrate binding. An FMN-binding site is contributed by arginine 200.

This sequence belongs to the pyridoxamine 5'-phosphate oxidase family. Homodimer. It depends on FMN as a cofactor.

The enzyme catalyses pyridoxamine 5'-phosphate + O2 + H2O = pyridoxal 5'-phosphate + H2O2 + NH4(+). It catalyses the reaction pyridoxine 5'-phosphate + O2 = pyridoxal 5'-phosphate + H2O2. It functions in the pathway cofactor metabolism; pyridoxal 5'-phosphate salvage; pyridoxal 5'-phosphate from pyridoxamine 5'-phosphate: step 1/1. The protein operates within cofactor metabolism; pyridoxal 5'-phosphate salvage; pyridoxal 5'-phosphate from pyridoxine 5'-phosphate: step 1/1. Its function is as follows. Catalyzes the oxidation of either pyridoxine 5'-phosphate (PNP) or pyridoxamine 5'-phosphate (PMP) into pyridoxal 5'-phosphate (PLP). The sequence is that of Pyridoxine/pyridoxamine 5'-phosphate oxidase from Anaplasma marginale (strain St. Maries).